Consider the following 276-residue polypeptide: Putative metal-binding protein CT_415 (276 aa).

A signal peptide spans 1 to 18 (MRLLFLLLFSLGITCSYG). A divalent metal cation contacts are provided by His59, His121, His185, and Asp256.

Belongs to the bacterial solute-binding protein 9 family.

The protein resides in the periplasm. Its function is as follows. Part of an ATP-binding cassette (ABC) transport system involved in metal import. Binds a metal with high affinity and specificity and delivers it to the membrane permease for translocation into the cytoplasm. In Chlamydia trachomatis serovar D (strain ATCC VR-885 / DSM 19411 / UW-3/Cx), this protein is Putative metal-binding protein CT_415.